We begin with the raw amino-acid sequence, 449 residues long: MLKVLLVGSGAREHAIAEALCGAPDEDVELYAFMGNRNPGIIRLAEDYVVGDPTDVEAVARAAADWNVDFAVVGPEDPLAEGVADRLEEEGIPTFGPKRGPARIEWDKGFARELMEKYDIPGRPEFGIFEDPDEACDFIDELGKPVAVKPAGLTGGKGVKVVGDQLKNLDEAKEYVKEIFEEDIGGIPKVIIEEKCVGEEYTIQAYTDGEKVIPTPAVQDHPHAYEGDKGPITGGMGSYSCPDGLLPFITKEDYERSVEILERTVEAIKKETGEPYRGVLYGQFMLTAEGPVVIEFNCRYGDPEAMNILPIAEGDIVTLHASIAEGSMEGEIEFLEKATVCKYVVPEGYPESSEGEGDVIEVDEECIHRYDAVPYYASVNLDEDGKIRMTSSRALAIVGIGDELEQAEEAAESAIRECVSGERIRHRSDIGKHETVEKRVRRMKRIRGE.

One can recognise an ATP-grasp domain in the interval 112 to 325 (RELMEKYDIP…IVTLHASIAE (214 aa)). Residue 139-202 (IDELGKPVAV…EEKCVGEEYT (64 aa)) coordinates ATP. Mg(2+)-binding residues include Gln-283, Glu-295, and Asn-297. Positions 283, 295, and 297 each coordinate Mn(2+).

It belongs to the GARS family. Mg(2+) serves as cofactor. It depends on Mn(2+) as a cofactor.

It carries out the reaction 5-phospho-beta-D-ribosylamine + glycine + ATP = N(1)-(5-phospho-beta-D-ribosyl)glycinamide + ADP + phosphate + H(+). It functions in the pathway purine metabolism; IMP biosynthesis via de novo pathway; N(1)-(5-phospho-D-ribosyl)glycinamide from 5-phospho-alpha-D-ribose 1-diphosphate: step 2/2. This is Phosphoribosylamine--glycine ligase from Methanopyrus kandleri (strain AV19 / DSM 6324 / JCM 9639 / NBRC 100938).